A 519-amino-acid chain; its full sequence is Bifunctional pantoate ligase/cytidylate kinase (519 aa).

The segment at 1–282 (MNLTILRTKT…CGNTRLIDHG (282 aa)) is pantoate--beta-alanine ligase. Residue 30 to 37 (MGGLHQGH) coordinates ATP. The active-site Proton donor is the His37. Gln66 provides a ligand contact to (R)-pantoate. Position 66 (Gln66) interacts with beta-alanine. 155–158 (GEKD) is a binding site for ATP. Gln161 contacts (R)-pantoate. Residue 192–195 (CSSR) participates in ATP binding. Residues 283 to 519 (FLMKRNPIVA…PQEVWPTNAT (237 aa)) form a cytidylate kinase region.

This sequence in the N-terminal section; belongs to the pantothenate synthetase family. In the C-terminal section; belongs to the cytidylate kinase family. Type 1 subfamily.

The protein localises to the cytoplasm. The enzyme catalyses (R)-pantoate + beta-alanine + ATP = (R)-pantothenate + AMP + diphosphate + H(+). The catalysed reaction is CMP + ATP = CDP + ADP. It catalyses the reaction dCMP + ATP = dCDP + ADP. The protein operates within cofactor biosynthesis; (R)-pantothenate biosynthesis; (R)-pantothenate from (R)-pantoate and beta-alanine: step 1/1. In terms of biological role, catalyzes the condensation of pantoate with beta-alanine in an ATP-dependent reaction via a pantoyl-adenylate intermediate. Functionally, catalyzes the transfer of a phosphate group from ATP to either CMP or dCMP to form CDP or dCDP and ADP, respectively. This is Bifunctional pantoate ligase/cytidylate kinase from Prochlorococcus marinus (strain SARG / CCMP1375 / SS120).